The chain runs to 264 residues: Cytosolic Fe-S cluster assembly factor Nubp2 homolog (264 aa).

Residue 14–21 coordinates ATP; that stretch reads GKGGVGKS. [4Fe-4S] cluster is bound by residues cysteine 188 and cysteine 191.

This sequence belongs to the Mrp/NBP35 ATP-binding proteins family. NUBP2/CFD1 subfamily. In terms of assembly, heterotetramer of 2 Nubp1 and 2 Nubp2 chains. [4Fe-4S] cluster is required as a cofactor.

It localises to the cytoplasm. In terms of biological role, component of the cytosolic iron-sulfur (Fe/S) protein assembly (CIA) machinery. Required for maturation of extramitochondrial Fe-S proteins. The Nubp1-Nubp2 heterotetramer forms a Fe-S scaffold complex, mediating the de novo assembly of an Fe-S cluster and its transfer to target apoproteins. The protein is Cytosolic Fe-S cluster assembly factor Nubp2 homolog of Drosophila grimshawi (Hawaiian fruit fly).